The chain runs to 889 residues: DNA mismatch repair protein MutS (889 aa).

Position 641-648 (641-648 (GPNMAGKS)) interacts with ATP.

Belongs to the DNA mismatch repair MutS family.

In terms of biological role, this protein is involved in the repair of mismatches in DNA. It is possible that it carries out the mismatch recognition step. This protein has a weak ATPase activity. The sequence is that of DNA mismatch repair protein MutS from Orientia tsutsugamushi (strain Ikeda) (Rickettsia tsutsugamushi).